Consider the following 338-residue polypeptide: Holliday junction branch migration complex subunit RuvB (338 aa).

The tract at residues 4–187 (ADRLIHAEPQ…FGIPLRLEFY (184 aa)) is large ATPase domain (RuvB-L). Residues arginine 27, glycine 68, lysine 71, threonine 72, threonine 73, 134 to 136 (EDY), arginine 177, tyrosine 187, and arginine 224 each bind ATP. Threonine 72 provides a ligand contact to Mg(2+). The interval 188–258 (NVKDLSSIVT…VAELALDMLD (71 aa)) is small ATPAse domain (RuvB-S). Residues 261 to 338 (SEGFDYMDRK…RHFDIIQPEK (78 aa)) form a head domain (RuvB-H) region. DNA is bound by residues arginine 297, arginine 316, and arginine 321.

Belongs to the RuvB family. In terms of assembly, homohexamer. Forms an RuvA(8)-RuvB(12)-Holliday junction (HJ) complex. HJ DNA is sandwiched between 2 RuvA tetramers; dsDNA enters through RuvA and exits via RuvB. An RuvB hexamer assembles on each DNA strand where it exits the tetramer. Each RuvB hexamer is contacted by two RuvA subunits (via domain III) on 2 adjacent RuvB subunits; this complex drives branch migration. In the full resolvosome a probable DNA-RuvA(4)-RuvB(12)-RuvC(2) complex forms which resolves the HJ.

The protein localises to the cytoplasm. It carries out the reaction ATP + H2O = ADP + phosphate + H(+). In terms of biological role, the RuvA-RuvB-RuvC complex processes Holliday junction (HJ) DNA during genetic recombination and DNA repair, while the RuvA-RuvB complex plays an important role in the rescue of blocked DNA replication forks via replication fork reversal (RFR). RuvA specifically binds to HJ cruciform DNA, conferring on it an open structure. The RuvB hexamer acts as an ATP-dependent pump, pulling dsDNA into and through the RuvAB complex. RuvB forms 2 homohexamers on either side of HJ DNA bound by 1 or 2 RuvA tetramers; 4 subunits per hexamer contact DNA at a time. Coordinated motions by a converter formed by DNA-disengaged RuvB subunits stimulates ATP hydrolysis and nucleotide exchange. Immobilization of the converter enables RuvB to convert the ATP-contained energy into a lever motion, pulling 2 nucleotides of DNA out of the RuvA tetramer per ATP hydrolyzed, thus driving DNA branch migration. The RuvB motors rotate together with the DNA substrate, which together with the progressing nucleotide cycle form the mechanistic basis for DNA recombination by continuous HJ branch migration. Branch migration allows RuvC to scan DNA until it finds its consensus sequence, where it cleaves and resolves cruciform DNA. This Shewanella woodyi (strain ATCC 51908 / MS32) protein is Holliday junction branch migration complex subunit RuvB.